The sequence spans 297 residues: HTH-type transcriptional regulator ArgP (297 aa).

One can recognise an HTH lysR-type domain in the interval 4 to 60; it reads PDYRTLQALDAVIRERGFERAAQKLCITQSAVSQRIKQLENMFGQPLLVRTVPPRPT. The H-T-H motif DNA-binding region spans 21–40; that stretch reads FERAAQKLCITQSAVSQRIK.

Belongs to the LysR transcriptional regulatory family. Homodimer.

Controls the transcription of genes involved in arginine and lysine metabolism. The polypeptide is HTH-type transcriptional regulator ArgP (Klebsiella pneumoniae subsp. pneumoniae (strain ATCC 700721 / MGH 78578)).